Consider the following 512-residue polypeptide: Proline--tRNA ligase (512 aa).

Over residues 460–470 the composition is skewed to acidic residues; that stretch reads SDEDDEQDTTD. The disordered stretch occupies residues 460 to 484; that stretch reads SDEDDEQDTTDENMGVNNDTTVESN.

The protein belongs to the class-II aminoacyl-tRNA synthetase family. ProS type 3 subfamily. As to quaternary structure, homodimer.

It is found in the cytoplasm. It catalyses the reaction tRNA(Pro) + L-proline + ATP = L-prolyl-tRNA(Pro) + AMP + diphosphate. Catalyzes the attachment of proline to tRNA(Pro) in a two-step reaction: proline is first activated by ATP to form Pro-AMP and then transferred to the acceptor end of tRNA(Pro). The protein is Proline--tRNA ligase of Haloquadratum walsbyi (strain DSM 16790 / HBSQ001).